A 219-amino-acid polypeptide reads, in one-letter code: Small ribosomal subunit protein uS3c (219 aa).

Positions 43 to 120 (IQNYIQKNMQ…KINITITKIT (78 aa)) constitute a KH type-2 domain.

The protein belongs to the universal ribosomal protein uS3 family. Part of the 30S ribosomal subunit.

Its subcellular location is the plastid. The protein resides in the chloroplast. The sequence is that of Small ribosomal subunit protein uS3c (rps3) from Oenothera elata subsp. hookeri (Hooker's evening primrose).